A 354-amino-acid chain; its full sequence is DNA integrity scanning protein DisA (354 aa).

Residues Gly6 to Ser144 form the DAC domain. Residues Gly73, Leu91, and Thr104–Thr108 each bind ATP.

The protein belongs to the DisA family. As to quaternary structure, homooctamer. Mg(2+) is required as a cofactor.

It catalyses the reaction 2 ATP = 3',3'-c-di-AMP + 2 diphosphate. Functionally, participates in a DNA-damage check-point that is active prior to asymmetric division when DNA is damaged. DisA forms globular foci that rapidly scan along the chromosomes during sporulation, searching for lesions. When a lesion is present, DisA pauses at the lesion site. This triggers a cellular response that culminates in a temporary block in sporulation initiation. Also has diadenylate cyclase activity, catalyzing the condensation of 2 ATP molecules into cyclic di-AMP (c-di-AMP). c-di-AMP acts as a signaling molecule that couples DNA integrity with progression of sporulation. The rise in c-di-AMP level generated by DisA while scanning the chromosome, operates as a positive signal that advances sporulation; upon encountering a lesion, the DisA focus arrests at the damaged site and halts c-di-AMP synthesis. The protein is DNA integrity scanning protein DisA of Clostridium botulinum (strain Alaska E43 / Type E3).